Consider the following 962-residue polypeptide: Protease 3 (962 aa).

Residues 1–23 (MPRSTWFKALLLLVALWAPLSQA) form the signal peptide. Histidine 88 contacts Zn(2+). The active-site Proton acceptor is the glutamate 91. Zn(2+) is bound by residues histidine 92 and glutamate 169.

Belongs to the peptidase M16 family. As to quaternary structure, monomer. Requires Zn(2+) as cofactor.

It is found in the periplasm. The enzyme catalyses Preferential cleavage of 16-Tyr-|-Leu-17 and 25-Phe-|-Tyr-26 bonds of oxidized insulin B chain. Also acts on other substrates of Mw less than 7 kDa such as insulin and glucagon.. Its function is as follows. Endopeptidase that degrades small peptides of less than 7 kDa, such as glucagon and insulin. The chain is Protease 3 (ptrA) from Escherichia coli O157:H7.